Reading from the N-terminus, the 740-residue chain is Ion-translocating oxidoreductase complex subunit C (740 aa).

2 consecutive 4Fe-4S ferredoxin-type domains span residues 369–397 (GEPQEEQSCIRCSACADACPADLLPQQLY) and 407–436 (KATTHNIADCIECGACAWVCPSNIPLVQYF). [4Fe-4S] cluster contacts are provided by C377, C380, C383, C387, C416, C419, C422, and C426. The segment at 602 to 717 (KLEQQQANAE…PEEQVDPRKA (116 aa)) is disordered. Low complexity-rich tracts occupy residues 605–615 (QQQANAEPEQQ) and 637–647 (QQQANAEPEQQ).

The protein belongs to the 4Fe4S bacterial-type ferredoxin family. RnfC subfamily. The complex is composed of six subunits: RsxA, RsxB, RsxC, RsxD, RsxE and RsxG. The cofactor is [4Fe-4S] cluster.

The protein localises to the cell inner membrane. In terms of biological role, part of a membrane-bound complex that couples electron transfer with translocation of ions across the membrane. Required to maintain the reduced state of SoxR. In Escherichia coli (strain ATCC 8739 / DSM 1576 / NBRC 3972 / NCIMB 8545 / WDCM 00012 / Crooks), this protein is Ion-translocating oxidoreductase complex subunit C.